A 133-amino-acid chain; its full sequence is Large ribosomal subunit protein uL22 (133 aa).

The protein belongs to the universal ribosomal protein uL22 family. In terms of assembly, part of the 50S ribosomal subunit.

This protein binds specifically to 23S rRNA; its binding is stimulated by other ribosomal proteins, e.g. L4, L17, and L20. It is important during the early stages of 50S assembly. It makes multiple contacts with different domains of the 23S rRNA in the assembled 50S subunit and ribosome. Its function is as follows. The globular domain of the protein is located near the polypeptide exit tunnel on the outside of the subunit, while an extended beta-hairpin is found that lines the wall of the exit tunnel in the center of the 70S ribosome. This Aquifex pyrophilus protein is Large ribosomal subunit protein uL22.